A 182-amino-acid chain; its full sequence is UPF0200 protein Mboo_1593 (182 aa).

Residue 8-15 (GLPASGKG) participates in ATP binding.

The protein belongs to the UPF0200 family.

This chain is UPF0200 protein Mboo_1593, found in Methanoregula boonei (strain DSM 21154 / JCM 14090 / 6A8).